Here is an 88-residue protein sequence, read N- to C-terminus: MVKLRLKRCGRKQRAVYRIVAIDVRSRREGRDLQKVGFYDPIKSQTYLNVPAILDFLEKGAQPTETVYDILKRAEVFKEFRLNQTKFN.

As to quaternary structure, component of the chloroplast small ribosomal subunit (SSU). Mature 70S chloroplast ribosomes of higher plants consist of a small (30S) and a large (50S) subunit. The 30S small subunit contains 1 molecule of ribosomal RNA (16S rRNA) and 24 different proteins. The 50S large subunit contains 3 rRNA molecules (23S, 5S and 4.5S rRNA) and 33 different proteins.

It is found in the plastid. The protein resides in the chloroplast. Functionally, component of the chloroplast ribosome (chloro-ribosome), a dedicated translation machinery responsible for the synthesis of chloroplast genome-encoded proteins, including proteins of the transcription and translation machinery and components of the photosynthetic apparatus. This Spinacia oleracea (Spinach) protein is Small ribosomal subunit protein bS16c.